We begin with the raw amino-acid sequence, 330 residues long: Ketol-acid reductoisomerase (NADP(+)) (330 aa).

One can recognise a KARI N-terminal Rossmann domain in the interval Val2–Thr182. NADP(+) contacts are provided by residues Tyr25 to Gln28, Arg48, Ser53, and Asp83 to Gln86. Residue His108 is part of the active site. Gly134 serves as a coordination point for NADP(+). The region spanning Thr183–Glu328 is the KARI C-terminal knotted domain. Mg(2+) contacts are provided by Asp191, Glu195, Glu227, and Glu231. Ser252 provides a ligand contact to substrate.

Belongs to the ketol-acid reductoisomerase family. It depends on Mg(2+) as a cofactor.

The catalysed reaction is (2R)-2,3-dihydroxy-3-methylbutanoate + NADP(+) = (2S)-2-acetolactate + NADPH + H(+). The enzyme catalyses (2R,3R)-2,3-dihydroxy-3-methylpentanoate + NADP(+) = (S)-2-ethyl-2-hydroxy-3-oxobutanoate + NADPH + H(+). The protein operates within amino-acid biosynthesis; L-isoleucine biosynthesis; L-isoleucine from 2-oxobutanoate: step 2/4. It participates in amino-acid biosynthesis; L-valine biosynthesis; L-valine from pyruvate: step 2/4. In terms of biological role, involved in the biosynthesis of branched-chain amino acids (BCAA). Catalyzes an alkyl-migration followed by a ketol-acid reduction of (S)-2-acetolactate (S2AL) to yield (R)-2,3-dihydroxy-isovalerate. In the isomerase reaction, S2AL is rearranged via a Mg-dependent methyl migration to produce 3-hydroxy-3-methyl-2-ketobutyrate (HMKB). In the reductase reaction, this 2-ketoacid undergoes a metal-dependent reduction by NADPH to yield (R)-2,3-dihydroxy-isovalerate. In Methanocaldococcus jannaschii (strain ATCC 43067 / DSM 2661 / JAL-1 / JCM 10045 / NBRC 100440) (Methanococcus jannaschii), this protein is Ketol-acid reductoisomerase (NADP(+)).